The sequence spans 110 residues: UPF0367 protein sync_2587 (110 aa).

Belongs to the UPF0367 family.

The protein is UPF0367 protein sync_2587 of Synechococcus sp. (strain CC9311).